The primary structure comprises 625 residues: DNA mismatch repair protein MutL (625 aa).

Belongs to the DNA mismatch repair MutL/HexB family.

Its function is as follows. This protein is involved in the repair of mismatches in DNA. It is required for dam-dependent methyl-directed DNA mismatch repair. May act as a 'molecular matchmaker', a protein that promotes the formation of a stable complex between two or more DNA-binding proteins in an ATP-dependent manner without itself being part of a final effector complex. The polypeptide is DNA mismatch repair protein MutL (Azorhizobium caulinodans (strain ATCC 43989 / DSM 5975 / JCM 20966 / LMG 6465 / NBRC 14845 / NCIMB 13405 / ORS 571)).